The chain runs to 371 residues: Glycosyltransferase 8 domain-containing protein 1 (371 aa).

Topologically, residues 1 to 7 (MSFRKVH) are cytoplasmic. Residues 8–28 (IAIILLAAVVFLLILHHNILG) form a helical; Signal-anchor for type II membrane protein membrane-spanning segment. Topologically, residues 29-371 (LTDILTRQSS…RRHGEADGTK (343 aa)) are lumenal. Asparagine 104, asparagine 249, and asparagine 257 each carry an N-linked (GlcNAc...) asparagine glycan.

It belongs to the glycosyltransferase 8 family.

It is found in the membrane. The protein is Glycosyltransferase 8 domain-containing protein 1 (glt8d1) of Xenopus tropicalis (Western clawed frog).